An 82-amino-acid polypeptide reads, in one-letter code: RNA-binding protein Hfq (82 aa).

Positions 9–69 constitute a Sm domain; sequence DHFLNQLRKE…ISTFSPARNV (61 aa).

This sequence belongs to the Hfq family. As to quaternary structure, homohexamer.

Its function is as follows. RNA chaperone that binds small regulatory RNA (sRNAs) and mRNAs to facilitate mRNA translational regulation in response to envelope stress, environmental stress and changes in metabolite concentrations. Also binds with high specificity to tRNAs. In Exiguobacterium sp. (strain ATCC BAA-1283 / AT1b), this protein is RNA-binding protein Hfq.